The sequence spans 307 residues: 4-hydroxy-3-methylbut-2-enyl diphosphate reductase (307 aa).

Cysteine 13 provides a ligand contact to [4Fe-4S] cluster. 2 residues coordinate (2E)-4-hydroxy-3-methylbut-2-enyl diphosphate: histidine 42 and histidine 75. Residues histidine 42 and histidine 75 each coordinate dimethylallyl diphosphate. Isopentenyl diphosphate-binding residues include histidine 42 and histidine 75. Position 97 (cysteine 97) interacts with [4Fe-4S] cluster. Histidine 125 provides a ligand contact to (2E)-4-hydroxy-3-methylbut-2-enyl diphosphate. Histidine 125 lines the dimethylallyl diphosphate pocket. Residue histidine 125 participates in isopentenyl diphosphate binding. Glutamate 127 acts as the Proton donor in catalysis. Position 165 (threonine 165) interacts with (2E)-4-hydroxy-3-methylbut-2-enyl diphosphate. Cysteine 195 serves as a coordination point for [4Fe-4S] cluster. (2E)-4-hydroxy-3-methylbut-2-enyl diphosphate-binding residues include serine 223, serine 224, asparagine 225, and serine 267. Serine 223, serine 224, asparagine 225, and serine 267 together coordinate dimethylallyl diphosphate. Positions 223, 224, 225, and 267 each coordinate isopentenyl diphosphate.

This sequence belongs to the IspH family. It depends on [4Fe-4S] cluster as a cofactor.

It carries out the reaction isopentenyl diphosphate + 2 oxidized [2Fe-2S]-[ferredoxin] + H2O = (2E)-4-hydroxy-3-methylbut-2-enyl diphosphate + 2 reduced [2Fe-2S]-[ferredoxin] + 2 H(+). The catalysed reaction is dimethylallyl diphosphate + 2 oxidized [2Fe-2S]-[ferredoxin] + H2O = (2E)-4-hydroxy-3-methylbut-2-enyl diphosphate + 2 reduced [2Fe-2S]-[ferredoxin] + 2 H(+). Its pathway is isoprenoid biosynthesis; dimethylallyl diphosphate biosynthesis; dimethylallyl diphosphate from (2E)-4-hydroxy-3-methylbutenyl diphosphate: step 1/1. It functions in the pathway isoprenoid biosynthesis; isopentenyl diphosphate biosynthesis via DXP pathway; isopentenyl diphosphate from 1-deoxy-D-xylulose 5-phosphate: step 6/6. Its function is as follows. Catalyzes the conversion of 1-hydroxy-2-methyl-2-(E)-butenyl 4-diphosphate (HMBPP) into a mixture of isopentenyl diphosphate (IPP) and dimethylallyl diphosphate (DMAPP). Acts in the terminal step of the DOXP/MEP pathway for isoprenoid precursor biosynthesis. This chain is 4-hydroxy-3-methylbut-2-enyl diphosphate reductase, found in Chlamydia trachomatis serovar A (strain ATCC VR-571B / DSM 19440 / HAR-13).